Consider the following 317-residue polypeptide: MANTLAQLKSLTTIVADTGDIEAIKRYQPQDATTNPSLILKASQIPEYAPYIDQAIAWAKTQSNDVAQQIEDAGDKLAVTIGVEILKYVPGRMSTEVDARLSFDKQKSIDKAHKLIKLYQEAGIDKSRILIKLASTWEGICAAKELEQEGINCNLTLLFSFAQARACAEAGVYLVSPFVGRILDWYKKDTGQDYTAETDPGVISVTEIYNYYKQHGHNTVVMGASFRNTGEIIELAGCDRLTIGPALLEELANSDQLVVQKLKPALTQTAAPAPMSEAEFRWDFNEDAMAVDKLAEGIRNFAIDQGKLEVMLKAKLA.

The Schiff-base intermediate with substrate role is filled by lysine 132.

This sequence belongs to the transaldolase family. Type 1 subfamily. In terms of assembly, homodimer.

Its subcellular location is the cytoplasm. The enzyme catalyses D-sedoheptulose 7-phosphate + D-glyceraldehyde 3-phosphate = D-erythrose 4-phosphate + beta-D-fructose 6-phosphate. The protein operates within carbohydrate degradation; pentose phosphate pathway; D-glyceraldehyde 3-phosphate and beta-D-fructose 6-phosphate from D-ribose 5-phosphate and D-xylulose 5-phosphate (non-oxidative stage): step 2/3. Transaldolase is important for the balance of metabolites in the pentose-phosphate pathway. The sequence is that of Transaldolase from Shewanella denitrificans (strain OS217 / ATCC BAA-1090 / DSM 15013).